Here is a 732-residue protein sequence, read N- to C-terminus: Cullin-3A (732 aa).

Positions 662–724 constitute a Cullin neddylation domain; the sequence is DRKPQIEAAI…RDFLERDSTD (63 aa). A Glycyl lysine isopeptide (Lys-Gly) (interchain with G-Cter in NEDD8) cross-link involves residue Lys676.

It belongs to the cullin family. In terms of assembly, interacts with CSN2 and RBX1A. Interacts with BTB/POZ domain-containing proteins BPM1, BPM2, BPM3, BPM6, BT1, BT2, BT3, BT5, AT1G01640, AT1G21780 and AT5G48510. Interacts with SR1IP1. Interacts with NPR3 and NPR4. Binds to NPR1; this interaction requires NPR3 and NPR4. Post-translationally, neddylated. Deneddylated via its interaction with the COP9 signalosome (CSN) complex.

In terms of biological role, component of the cullin-RING ubiquitin ligases (CRL), or CUL3-RBX1-BTB protein E3 ligase complexes which mediate the ubiquitination and subsequent proteasomal degradation of target proteins. The functional specificity of the CRL complex depends on the BTB domain-containing protein as the substrate recognition component. Involved in embryo pattern formation and endosperm development. Required for the normal division and organization of the root stem cells and columella root cap cells. Regulates primary root growth by an unknown pathway, but in an ethylene-dependent manner. Functions in distal root patterning, by an ethylene-independent mechanism. Functionally redundant with CUL3B. The sequence is that of Cullin-3A from Arabidopsis thaliana (Mouse-ear cress).